A 160-amino-acid chain; its full sequence is Cytochrome b6-f complex subunit 4 (160 aa).

The next 3 helical transmembrane spans lie at 36–56 (LLYI…GLAV), 95–115 (LLGI…PFIE), and 131–151 (AVFL…TLPI).

It belongs to the cytochrome b family. PetD subfamily. In terms of assembly, the 4 large subunits of the cytochrome b6-f complex are cytochrome b6, subunit IV (17 kDa polypeptide, PetD), cytochrome f and the Rieske protein, while the 4 small subunits are PetG, PetL, PetM and PetN. The complex functions as a dimer.

It localises to the cellular thylakoid membrane. Component of the cytochrome b6-f complex, which mediates electron transfer between photosystem II (PSII) and photosystem I (PSI), cyclic electron flow around PSI, and state transitions. This Trichodesmium erythraeum (strain IMS101) protein is Cytochrome b6-f complex subunit 4.